Here is a 286-residue protein sequence, read N- to C-terminus: MIRPRKVFAQHWLKSEKALDAIIKAAECTESDRSPKGDCILEIGPGTGILTRRLLPLVQSLIAVEIDRDLCQLLSKQLGKTENFLLLQGDFLTLDLPSYLVAFPNFQKPNKVVANIPYNITGPIIEKLLGTIANPNPEPFDSIVLLVQKEVAERLYAKPGSKTFGALSVRVQYLAECELICTVPASAFHPAPKVDSAVVRLRPRKIEIPALNPRQLETFLKLGFGAKRKMLRNNLQSVIERDRLSHLLEQLKINPQARAEDISVQQWVILANELAVASGEQGVGNR.

Residues His-11, Leu-13, Gly-44, Glu-65, Asp-90, and Asn-115 each coordinate S-adenosyl-L-methionine.

This sequence belongs to the class I-like SAM-binding methyltransferase superfamily. rRNA adenine N(6)-methyltransferase family. RsmA subfamily.

It is found in the cytoplasm. The enzyme catalyses adenosine(1518)/adenosine(1519) in 16S rRNA + 4 S-adenosyl-L-methionine = N(6)-dimethyladenosine(1518)/N(6)-dimethyladenosine(1519) in 16S rRNA + 4 S-adenosyl-L-homocysteine + 4 H(+). Functionally, specifically dimethylates two adjacent adenosines (A1518 and A1519) in the loop of a conserved hairpin near the 3'-end of 16S rRNA in the 30S particle. May play a critical role in biogenesis of 30S subunits. The sequence is that of Ribosomal RNA small subunit methyltransferase A from Nostoc punctiforme (strain ATCC 29133 / PCC 73102).